The primary structure comprises 651 residues: Acetyl-coenzyme A synthetase (651 aa).

CoA contacts are provided by residues 189-192, Thr311, and Asn335; that span reads RGGK. ATP-binding positions include 387-389, 411-416, Asp500, and Arg515; these read GEP and DTWWQT. Ser523 contacts CoA. Arg526 is an ATP binding site. Residues Val537, His539, and Val542 each contribute to the Mg(2+) site. Residue Arg584 participates in CoA binding. The residue at position 609 (Lys609) is an N6-acetyllysine.

The protein belongs to the ATP-dependent AMP-binding enzyme family. Mg(2+) is required as a cofactor. Acetylated. Deacetylation by the SIR2-homolog deacetylase activates the enzyme.

It catalyses the reaction acetate + ATP + CoA = acetyl-CoA + AMP + diphosphate. In terms of biological role, catalyzes the conversion of acetate into acetyl-CoA (AcCoA), an essential intermediate at the junction of anabolic and catabolic pathways. AcsA undergoes a two-step reaction. In the first half reaction, AcsA combines acetate with ATP to form acetyl-adenylate (AcAMP) intermediate. In the second half reaction, it can then transfer the acetyl group from AcAMP to the sulfhydryl group of CoA, forming the product AcCoA. In Agrobacterium fabrum (strain C58 / ATCC 33970) (Agrobacterium tumefaciens (strain C58)), this protein is Acetyl-coenzyme A synthetase.